Consider the following 523-residue polypeptide: Dynein regulatory complex subunit 3 (523 aa).

LRR repeat units follow at residues 44 to 65 (DVLS…WQFE), 66 to 87 (NLRK…ENLA), 88 to 109 (HLVW…DTLV), 110 to 131 (NLED…DALV), and 132 to 153 (KLQV…IYLR). In terms of domain architecture, LRRCT spans 166–204 (NPISEAEDYKMFICAYLPDLMYLDYRRIDDHTKKLAEAK). Coiled coils occupy residues 208–242 (SIDE…AFVE) and 366–391 (MTLE…VDMV).

This sequence belongs to the DRC3 family. In terms of assembly, component of the nexin-dynein regulatory complex (N-DRC). Interacts with DRC1. Interacts with TCTE1/DRC5. Interacts with DRC7.

The protein localises to the cytoplasm. The protein resides in the cytoskeleton. It localises to the cilium axoneme. Its subcellular location is the cell projection. It is found in the cilium. The protein localises to the flagellum axoneme. The protein resides in the flagellum. Functionally, component of the nexin-dynein regulatory complex (N-DRC) a key regulator of ciliary/flagellar motility which maintains the alignment and integrity of the distal axoneme and regulates microtubule sliding in motile axonemes. This is Dynein regulatory complex subunit 3 (DRC3) from Homo sapiens (Human).